The following is a 906-amino-acid chain: MGLRGLLCVCLVSLLALQAVAAQGSPTRNPKGGKKRMAVDAAVDGVVIRSLKVNCKVTSRFAHYIITSQVVNSADTAKEVSFNVEIPKTAFISDFAITADENAFTGDIKDKVTAWKQYRKAAISGENAGLVRASGRTMEQFSIHIIVGPRSKATFRLTYEEVLRRKLMQYDIVIKVKPQQLVQHFEIDVDIFEPQGIRKLDVEASFLPKELAAQLIKKSFSGKKGHVLFRPTVSQQQTCPTCSTTLLNGDFKVTYDVNRDDACDLLVANNYFAHFFAPQNLKKLNKNVVFVIDISSSMEGQKLKQTKEALHKILGDMRPGDYFDLVLFGSAVQSWKGSLVQASPANLEAARNFVQQFSLAGATNLNGGLLRGIEILNKAQQSLPELSNHASILIMLTDGEPTEGVMDRTQILKNVRDGIKGRFPLYNLGFGHDVDLNFLEVMSLENNGRVQRIYEDHDATQQLQGFYEQVANPLLRDVELLYPREAVSDLTQHRHKQYYEGSEIMVAGRIADHKLSSFKADVRAHGEGQEFMTTCLVDKEEMKKLLRERGHMLENHVERLWAYLTIQELLAKRMKLEGQEKANVSAKALQMSLAYQFVTPLTSMTVRGMTDQDGLEPIIDKPLDDYLPLEMVGPRKTFMLQASQPAPTHSSLDIKKLPDQVTGVDTDPHFLIHVPQKEDTLCFNINEEPGVVLSLVQDPDTGFSVNGQLIGNEAGSPGKHEGTYFGRLGIANPATDFQLEVTPQNITLNPGSGGPVFSWRDQAFLRQNEVLVTINRKRNLVVSVEDGGTFEVVLHRVWRGSAVRQDFLGFYVLDSHRMSARTHGLLGQFFHPFDYKVSNLHPGSDPTKTDATMVVKNRRLTVTRGLQKDYRKDPRHGAEVTCWFIHNNGDGLIDGIHTDYIVPDIF.

The N-terminal stretch at 1–22 (MGLRGLLCVCLVSLLALQAVAA) is a signal peptide. Positions 23–29 (QGSPTRN) are excised as a propeptide. A VIT domain is found at 32 to 161 (GGKKRMAVDA…KATFRLTYEE (130 aa)). C55 is a glycosylation site (S-linked (Hex...) cysteine). S124 is subject to Phosphoserine. The VWFA domain occupies 287-470 (NVVFVIDISS…QQLQGFYEQV (184 aa)). T397 and T402 each carry phosphothreonine. A glycan (N-linked (GlcNAc...) asparagine) is linked at N583. S643 carries O-linked (GalNAc...) serine glycosylation. T648 carries an O-linked (GalNAc...) threonine glycan. D667 carries the aspartate 1-(chondroitin 4-sulfate)-ester modification. Residues 668 to 906 (PHFLIHVPQK…HTDYIVPDIF (239 aa)) constitute a propeptide that is removed on maturation. N-linked (GlcNAc...) asparagine glycosylation occurs at N745.

Belongs to the ITIH family. In terms of assembly, I-alpha-I plasma protease inhibitors are assembled from one or two heavy chains (HC) and one light chain, bikunin. Inter-alpha-inhibitor (I-alpha-I) is composed of ITIH1/HC1, ITIH2/HC2 and bikunin. Interacts with TNFAIP6 (via Link and CUB domains). Post-translationally, heavy chains are linked to bikunin via chondroitin 4-sulfate esterified to the alpha-carboxyl of the C-terminal aspartate after propeptide cleavage. The S-linked glycan is composed of two 6-carbon sugars, possibly Glc or Gal.

The protein localises to the secreted. May act as a carrier of hyaluronan in serum or as a binding protein between hyaluronan and other matrix protein, including those on cell surfaces in tissues to regulate the localization, synthesis and degradation of hyaluronan which are essential to cells undergoing biological processes. The protein is Inter-alpha-trypsin inhibitor heavy chain H1 (ITIH1) of Bos taurus (Bovine).